We begin with the raw amino-acid sequence, 173 residues long: Crossover junction endodeoxyribonuclease RuvC (173 aa).

Catalysis depends on residues Asp8, Glu67, and Asp139. Residues Asp8, Glu67, and Asp139 each coordinate Mg(2+).

This sequence belongs to the RuvC family. In terms of assembly, homodimer which binds Holliday junction (HJ) DNA. The HJ becomes 2-fold symmetrical on binding to RuvC with unstacked arms; it has a different conformation from HJ DNA in complex with RuvA. In the full resolvosome a probable DNA-RuvA(4)-RuvB(12)-RuvC(2) complex forms which resolves the HJ. The cofactor is Mg(2+).

Its subcellular location is the cytoplasm. The enzyme catalyses Endonucleolytic cleavage at a junction such as a reciprocal single-stranded crossover between two homologous DNA duplexes (Holliday junction).. In terms of biological role, the RuvA-RuvB-RuvC complex processes Holliday junction (HJ) DNA during genetic recombination and DNA repair. Endonuclease that resolves HJ intermediates. Cleaves cruciform DNA by making single-stranded nicks across the HJ at symmetrical positions within the homologous arms, yielding a 5'-phosphate and a 3'-hydroxyl group; requires a central core of homology in the junction. The consensus cleavage sequence is 5'-(A/T)TT(C/G)-3'. Cleavage occurs on the 3'-side of the TT dinucleotide at the point of strand exchange. HJ branch migration catalyzed by RuvA-RuvB allows RuvC to scan DNA until it finds its consensus sequence, where it cleaves and resolves the cruciform DNA. The polypeptide is Crossover junction endodeoxyribonuclease RuvC (Edwardsiella ictaluri (strain 93-146)).